Here is a 417-residue protein sequence, read N- to C-terminus: UPF0754 membrane protein PCC8801_0398 (417 aa).

Transmembrane regions (helical) follow at residues 11 to 31 and 395 to 415; these read FSLL…GYFT and IVNI…ILLI.

The protein belongs to the UPF0754 family.

The protein localises to the cell inner membrane. The sequence is that of UPF0754 membrane protein PCC8801_0398 from Rippkaea orientalis (strain PCC 8801 / RF-1) (Cyanothece sp. (strain PCC 8801)).